The following is an 82-amino-acid chain: Protein RALF-like 8 (82 aa).

The signal sequence occupies residues 1–28 (MGMSKSIKVILSLALVVFLALAGTKVEA). 2 cysteine pairs are disulfide-bonded: C47–C55 and C67–C73.

Belongs to the plant rapid alkalinization factor (RALF) family. Expressed in leaves and flowers.

The protein resides in the secreted. Its function is as follows. Cell signaling peptide that may regulate plant stress, growth, and development. Mediates a rapid alkalinization of extracellular space by mediating a transient increase in the cytoplasmic Ca(2+) concentration leading to a calcium-dependent signaling events through a cell surface receptor and a concomitant activation of some intracellular mitogen-activated protein kinases. In Arabidopsis thaliana (Mouse-ear cress), this protein is Protein RALF-like 8 (RALFL8).